The sequence spans 411 residues: Serine hydroxymethyltransferase (411 aa).

120 to 122 (GHL) serves as a coordination point for (6S)-5,6,7,8-tetrahydrofolate. N6-(pyridoxal phosphate)lysine is present on K225. A (6S)-5,6,7,8-tetrahydrofolate-binding site is contributed by 350–352 (SPF).

Belongs to the SHMT family. Homodimer. Pyridoxal 5'-phosphate is required as a cofactor.

Its subcellular location is the cytoplasm. It catalyses the reaction (6R)-5,10-methylene-5,6,7,8-tetrahydrofolate + glycine + H2O = (6S)-5,6,7,8-tetrahydrofolate + L-serine. Its pathway is one-carbon metabolism; tetrahydrofolate interconversion. The protein operates within amino-acid biosynthesis; glycine biosynthesis; glycine from L-serine: step 1/1. Functionally, catalyzes the reversible interconversion of serine and glycine with tetrahydrofolate (THF) serving as the one-carbon carrier. This reaction serves as the major source of one-carbon groups required for the biosynthesis of purines, thymidylate, methionine, and other important biomolecules. Also exhibits THF-independent aldolase activity toward beta-hydroxyamino acids, producing glycine and aldehydes, via a retro-aldol mechanism. This is Serine hydroxymethyltransferase from Limosilactobacillus reuteri (strain DSM 20016) (Lactobacillus reuteri).